Consider the following 653-residue polypeptide: Leishmanolysin homolog (653 aa).

Positions 1-44 (MHAPPTATRRSGPRRTHGIMARLVRLAAGVLVVTLVIGALTALS) are cleaved as a signal peptide. Residues 45 to 113 (ADDAKTHPHK…ALAGDSAPDV (69 aa)) constitute a propeptide, activation peptide. Cystine bridges form between Cys-138/Cys-155 and Cys-203/Cys-242. His-276 is a binding site for Zn(2+). Residue Glu-277 is part of the active site. Residues His-280 and His-346 each coordinate Zn(2+). Intrachain disulfides connect Cys-326-Cys-398, Cys-405-Cys-468, Cys-418-Cys-437, Cys-427-Cys-502, Cys-479-Cys-524, Cys-529-Cys-579, and Cys-549-Cys-572. Residues Asn-383 and Asn-409 are each glycosylated (N-linked (GlcNAc...) asparagine). An N-linked (GlcNAc...) asparagine glycan is attached at Asn-569. Positions 590 to 631 (ESMTNSGSGSSRPAPVEPSGSGSGSSAATTAPSPTRDGSAAA) are disordered. The span at 591–600 (SMTNSGSGSS) shows a compositional bias: polar residues. A compositionally biased stretch (low complexity) spans 607–631 (PSGSGSGSSAATTAPSPTRDGSAAA). Ser-628 is lipidated: GPI-anchor amidated serine. Residues 629–653 (AAADRIAPRTAAVALLALAVAAACV) constitute a propeptide, removed in mature form.

It belongs to the peptidase M8 family. Zn(2+) is required as a cofactor.

It localises to the cell membrane. It catalyses the reaction Preference for hydrophobic residues at P1 and P1' and basic residues at P2' and P3'. A model nonapeptide is cleaved at -Ala-Tyr-|-Leu-Lys-Lys-.. In terms of biological role, plays an integral role during the infection of macrophages in the mammalian host. The polypeptide is Leishmanolysin homolog (gp63) (Crithidia fasciculata).